Here is a 100-residue protein sequence, read N- to C-terminus: MQRFTALHYTPFPLLVFLSSYFPLKMHLFTRVFFLIASITLLYRPTQRGIYIDYKRIVDFDGDLISVQNIQDVYTQCLQLSLYSYHAISRLFSEEKSSVH.

This is an uncharacterized protein from Saccharomyces cerevisiae (strain ATCC 204508 / S288c) (Baker's yeast).